The following is a 184-amino-acid chain: C-phycoerythrin beta chain (184 aa).

Cysteine 48 and cysteine 59 together coordinate (2R,3E)-phycoerythrobilin. Asparagine 70 bears the N4-methylasparagine mark. (2R,3E)-phycoerythrobilin is bound by residues cysteine 80 and cysteine 165.

Belongs to the phycobiliprotein family. In terms of assembly, heterodimer of an alpha and a beta chain. In terms of processing, contains three covalently linked bilin chromophores.

The protein resides in the cellular thylakoid membrane. Light-harvesting photosynthetic bile pigment-protein from the phycobiliprotein complex. The chain is C-phycoerythrin beta chain (cpeB) from Microchaete diplosiphon (Fremyella diplosiphon).